A 296-amino-acid chain; its full sequence is 6-hydroxypseudooxynicotine dehydrogenase complex subunit alpha (296 aa).

The FAD-binding PCMH-type domain maps to 1–177; the sequence is MKPPSFDYVV…VEVNVPQLPH (177 aa). FAD contacts are provided by residues 30-37, 111-115, and glutamate 124; these read IIAGGQSL and TIGGS.

Heterohexamer of 2 alpha (kdhA), 2 beta (kdhB) and 2 gamma (kdhC) subunit. Dimer of heterotrimers. It depends on FAD as a cofactor.

It carries out the reaction 6-hydroxypseudooxynicotine + A + H2O = 2,6-dihydroxypseudooxynicotine + AH2. It participates in alkaloid degradation; nicotine degradation. Its function is as follows. Molybdo-flavoprotein enzyme complex involved in nicotine degradation. The subunit gamma (large subunit) contains the substrate-binding sites, the subunit alpha (medium subunit) binds FAD and the subunit beta (small subunit) has a 2Fe-2S ferredoxin-type domain which binds 2 2Fe-2S clusters. The chain is 6-hydroxypseudooxynicotine dehydrogenase complex subunit alpha (kdhA) from Paenarthrobacter nicotinovorans (Arthrobacter nicotinovorans).